The chain runs to 502 residues: MKGTLIFVVFYSSYGFAHCNTILRSSSLSRNFEDSLRRIPRSTDKDETGFEDSNVQEVIFILLYCLFVALAILICGLIIFYNSRKRELRANRSRGDEYLLEPTSADHKRRNSSNIVPPEPTPYPITSGESDLRQTPSRLSNVECPPELELAPINEKIMYLHYYAEVEINEEDLDISKGRPLGSGEFGIIRKGFLRSKNSKNEEKESRLEVAVKLPLNEYNQIQQELIYDELKVMCAVGKHPNILALVGGITFGERKMIVSEFVENGDLLSFLRDNRIYFTNDQWTLETEQDSLSLVDLLSFAFQIAKGMEYLIHVPCVHRDLALRNVLIKKNRIIRIADFGLARRHKNKDYYKTQSVDTPLPIHWMAPESIDKLLFTQKSDVWSYGVCLYELFSLGKSPYENVIKYDQRDFYWKYVLSYLNEGKRLAQPAHADAEIYNVMKLCWDLDMNSRTTFLDCIEFFEKELKTTSNEYFLDLTRKLRSETNNQLRLSNWLSDEKHCDS.

The signal sequence occupies residues 1 to 19; it reads MKGTLIFVVFYSSYGFAHC. The Extracellular segment spans residues 20–58; it reads NTILRSSSLSRNFEDSLRRIPRSTDKDETGFEDSNVQEV. The helical transmembrane segment at 59-79 threads the bilayer; the sequence is IFILLYCLFVALAILICGLII. Residues 80 to 502 lie on the Cytoplasmic side of the membrane; sequence FYNSRKRELR…WLSDEKHCDS (423 aa). A disordered region spans residues 99 to 140; sequence LLEPTSADHKRRNSSNIVPPEPTPYPITSGESDLRQTPSRLS. Positions 127 to 140 are enriched in polar residues; it reads SGESDLRQTPSRLS. One can recognise a Protein kinase domain in the interval 175–473; it reads ISKGRPLGSG…ELKTTSNEYF (299 aa). Residues 181-189 and Lys213 contribute to the ATP site; that span reads LGSGEFGII. Catalysis depends on Asp321, which acts as the Proton acceptor.

This sequence belongs to the protein kinase superfamily. Tyr protein kinase family.

Its subcellular location is the cell membrane. It catalyses the reaction L-tyrosyl-[protein] + ATP = O-phospho-L-tyrosyl-[protein] + ADP + H(+). Receptor tyrosine kinase which plays a role in promoting longevity and resistance to stresses including UV irradiation and high temperatures, probably downstream of daf-16. This Caenorhabditis elegans protein is Tyrosine-protein kinase receptor old-1.